Reading from the N-terminus, the 113-residue chain is 4-cresol dehydrogenase [hydroxylating] cytochrome c subunit (113 aa).

The first 33 residues, 1–33 (MTFPFSGAAVKRMLVTGVVLPFGLLVAAGQAQA), serve as a signal peptide directing secretion. Residues Cys-48, Cys-51, His-52, and Met-83 each contribute to the heme c site.

Tetramer of two cytochrome subunits and two flavoprotein subunits. In terms of processing, binds 1 heme c group covalently per subunit.

Its pathway is aromatic compound metabolism; p-cresol degradation. Functionally, this is the heme-containing component of the p-cresol methylhydroxylase. It accepts electrons from the flavoprotein subunit. The polypeptide is 4-cresol dehydrogenase [hydroxylating] cytochrome c subunit (pchC) (Pseudomonas putida (Arthrobacter siderocapsulatus)).